Reading from the N-terminus, the 168-residue chain is Plastocyanin B, chloroplastic (168 aa).

Residues 1 to 69 constitute a chloroplast transit peptide; it reads MAAVTSAAVS…SAMIASNAMA (69 aa). The Plastocyanin-like domain maps to 70 to 168; sequence VDVLLGADDG…AGMVGKVIVN (99 aa). 4 residues coordinate Cu cation: His-106, Cys-153, His-156, and Met-161.

The protein belongs to the plastocyanin family. Requires Cu(2+) as cofactor.

It localises to the plastid. The protein resides in the chloroplast thylakoid membrane. Its function is as follows. Participates in electron transfer between P700 and the cytochrome b6-f complex in photosystem I. The sequence is that of Plastocyanin B, chloroplastic (PETE) from Populus nigra (Lombardy poplar).